A 204-amino-acid chain; its full sequence is MKNIEDLIQKAVELQSNGLVTGQIADELNVSRETVTWLLTRSKKEVAAPAPKDISVNWSNIGKSATRLHYISLALCDMVLETLEETNAEVDVVVGVAASGIPLASMMANELGADFALYHSRKGQDVVQPGQKGTISRNFGGVAGKNCVIVDDVITTGSTTMEVIEQLREMGAKPRAVAVLVDKKGADMIANVPIRSLVRIVRLD.

Belongs to the purine/pyrimidine phosphoribosyltransferase family. GfcR subfamily.

In Methanosarcina barkeri (strain Fusaro / DSM 804), this protein is Transcriptional regulator GfcR 1.